A 252-amino-acid chain; its full sequence is MMLGRTSRLLLVLLFIAYATTSGNGNEGSKVGSCPCDHTVSSHSPPNENIMRHLRKYLKAYQRCFSYVRFQLPLKNVCGGSTDGWVQELMHCFDSGECGHAQPRVVDAPLHRTQLPEPTEAAPSDTATTSQTYLPSTLQRTQQPTPLEGALSLDSKLIPTHETTTYTSGHSLGAEPEAKENQKQLKENRGPQAGTSATVPVLSLLAIVFILAGVLLYVVCKRRKNQLLQHPPDLAASLYTCSRRTRAENGTL.

A signal peptide spans 1–25 (MMLGRTSRLLLVLLFIAYATTSGNG). Over 26-198 (NEGSKVGSCP…RGPQAGTSAT (173 aa)) the chain is Extracellular. 2 disulfides stabilise this stretch: C34/C64 and C36/C78. Disordered regions lie at residues 115–145 (LPEP…QQPT) and 163–195 (TTTY…QAGT). Residues 125–145 (DTATTSQTYLPSTLQRTQQPT) show a composition bias toward polar residues. Basic and acidic residues predominate over residues 176 to 189 (PEAKENQKQLKENR). Residues 199-219 (VPVLSLLAIVFILAGVLLYVV) traverse the membrane as a helical segment. The Cytoplasmic segment spans residues 220–252 (CKRRKNQLLQHPPDLAASLYTCSRRTRAENGTL).

The protein belongs to the intercrine alpha (chemokine CxC) family. In terms of processing, glycosylated.

It localises to the membrane. Its function is as follows. Induces a strong chemotactic response. Induces calcium mobilization. Binds to CXCR6/Bonzo. Also acts as a scavenger receptor on macrophages, which specifically binds to OxLDL (oxidized low density lipoprotein), suggesting that it may be involved in pathophysiology such as atherogenesis. This is C-X-C motif chemokine 16 (CXCL16) from Bos taurus (Bovine).